Reading from the N-terminus, the 226-residue chain is 2,3-bisphosphoglycerate-dependent phosphoglycerate mutase (226 aa).

Substrate contacts are provided by residues 8–15, 21–22, Arg58, 112–115, Lys123, 139–140, and 183–184; these read RHGQSQWN, TG, ERMY, RR, and GN. The active-site Tele-phosphohistidine intermediate is His9. Glu112 functions as the Proton donor/acceptor in the catalytic mechanism.

This sequence belongs to the phosphoglycerate mutase family. BPG-dependent PGAM subfamily.

The enzyme catalyses (2R)-2-phosphoglycerate = (2R)-3-phosphoglycerate. It participates in carbohydrate degradation; glycolysis; pyruvate from D-glyceraldehyde 3-phosphate: step 3/5. In terms of biological role, catalyzes the interconversion of 2-phosphoglycerate and 3-phosphoglycerate. The chain is 2,3-bisphosphoglycerate-dependent phosphoglycerate mutase from Protochlamydia amoebophila (strain UWE25).